Reading from the N-terminus, the 435-residue chain is Trigger factor (435 aa).

In terms of domain architecture, PPIase FKBP-type spans 164–249 (GDFAKFDFEG…LHEIQGKKAG (86 aa)).

The protein belongs to the FKBP-type PPIase family. Tig subfamily.

The protein resides in the cytoplasm. The enzyme catalyses [protein]-peptidylproline (omega=180) = [protein]-peptidylproline (omega=0). Involved in protein export. Acts as a chaperone by maintaining the newly synthesized protein in an open conformation. Functions as a peptidyl-prolyl cis-trans isomerase. This chain is Trigger factor, found in Campylobacter fetus subsp. fetus (strain 82-40).